A 182-amino-acid polypeptide reads, in one-letter code: CDP-diacylglycerol--glycerol-3-phosphate 3-phosphatidyltransferase (182 aa).

At 2 to 12 the chain is on the cytoplasmic side; the sequence is QFNIPTLLTLF. The helical transmembrane segment at 13–37 threads the bilayer; it reads RVILIPFFVLVFYLPVTWSPFAAAL. Residues 38–60 lie on the Periplasmic side of the membrane; that stretch reads IFCVAAVTDWFDGFLARRWNQST. Residues 61–81 form a helical membrane-spanning segment; the sequence is RFGAFLDPVADKVLVAIAMVL. The Cytoplasmic segment spans residues 82–86; sequence VTEHY. A helical membrane pass occupies residues 87-107; the sequence is HSWWVTLPAATMIAREIIISA. Residues 108–145 are Periplasmic-facing; that stretch reads LREWMAELGKRSSVAVSWIGKVKTTAQMVALAWLLWRP. Residues 146-168 form a helical membrane-spanning segment; that stretch reads NIWVEYAGIALFFVAAVLTLWSM. Residues 169–181 lie on the Cytoplasmic side of the membrane; it reads LQYLSAARADLLD.

Belongs to the CDP-alcohol phosphatidyltransferase class-I family.

Its subcellular location is the cell inner membrane. It carries out the reaction a CDP-1,2-diacyl-sn-glycerol + sn-glycerol 3-phosphate = a 1,2-diacyl-sn-glycero-3-phospho-(1'-sn-glycero-3'-phosphate) + CMP + H(+). Its pathway is phospholipid metabolism; phosphatidylglycerol biosynthesis; phosphatidylglycerol from CDP-diacylglycerol: step 1/2. In terms of biological role, catalyzes the conversion of cytidine diphosphate diacylglycerol (CDP-DG) and glycerol 3-phosphate into phosphatidylglycerol. Essential for the synthesis of anionic phospholipids, thereby playing a role in balancing the ratio of zwitterionic and anionic phospholipids, which is thought to be important for normal membrane function. This is CDP-diacylglycerol--glycerol-3-phosphate 3-phosphatidyltransferase from Shigella sonnei (strain Ss046).